Consider the following 386-residue polypeptide: tRNA N6-adenosine threonylcarbamoyltransferase (386 aa).

3 residues coordinate a divalent metal cation: histidine 141, histidine 145, and tyrosine 162. Substrate-binding positions include 162–166, aspartate 194, glycine 209, glutamate 213, and asparagine 315; that span reads YVSGG. Aspartate 344 serves as a coordination point for a divalent metal cation.

It belongs to the KAE1 / TsaD family. Component of the EKC/KEOPS complex composed of at least BUD32, CGI121, GON7, KAE1 and PCC1; the whole complex dimerizes. Requires a divalent metal cation as cofactor.

The protein localises to the cytoplasm. It localises to the nucleus. The catalysed reaction is L-threonylcarbamoyladenylate + adenosine(37) in tRNA = N(6)-L-threonylcarbamoyladenosine(37) in tRNA + AMP + H(+). Functionally, component of the EKC/KEOPS complex that is required for the formation of a threonylcarbamoyl group on adenosine at position 37 (t(6)A37) in tRNAs that read codons beginning with adenine. The complex is probably involved in the transfer of the threonylcarbamoyl moiety of threonylcarbamoyl-AMP (TC-AMP) to the N6 group of A37. KAE1 likely plays a direct catalytic role in this reaction, but requires other protein(s) of the complex to fulfill this activity. The EKC/KEOPS complex also promotes both telomere uncapping and telomere elongation. The complex is required for efficient recruitment of transcriptional coactivators. The sequence is that of tRNA N6-adenosine threonylcarbamoyltransferase from Saccharomyces cerevisiae (strain ATCC 204508 / S288c) (Baker's yeast).